The chain runs to 355 residues: Chemerin-like receptor 2 (355 aa).

At 1–41 (MEDLEETLFEEFENYSYALDYYSLESDLEEKVQLGVVHWVS) the chain is on the extracellular side. The N-linked (GlcNAc...) asparagine glycan is linked to asparagine 14. Residues 42-62 (LVLYCLSFVLGIPGNAIVIWF) traverse the membrane as a helical segment. Over 63–73 (TGFKWKKTVST) the chain is Cytoplasmic. Residues 74 to 94 (LWFLNLAIADFIFLLFLPLYI) form a helical membrane-spanning segment. Over 95–112 (SYVVMNFHWPFGIWLCKA) the chain is Extracellular. A disulfide bridge connects residues cysteine 110 and cysteine 187. The helical transmembrane segment at 113–133 (NSFTAQLNMFASVFFLTVISL) threads the bilayer. Residues 134–154 (DHYIHLIHPVLSHRHRTLKNS) are Cytoplasmic-facing. Residues 155 to 175 (LIVIIFIWLLASLIGGPALYF) form a helical membrane-spanning segment. Topologically, residues 176–210 (RDTVEFNNHTLCYNNFQKHDPDLTVIRHHVLTWVK) are extracellular. Residues 211 to 231 (FIVGYLFPLLTMSICYLCLIF) traverse the membrane as a helical segment. Residues 232 to 247 (KVKKRSILISSRHFWT) are Cytoplasmic-facing. A helical membrane pass occupies residues 248 to 268 (ILAVVVAFVVCWTPYHLFSIW). Over 269-286 (ELTIHHNSYSHHVMQAGI) the chain is Extracellular. A helical membrane pass occupies residues 287 to 307 (PLSTGLAFLNSCLNPILYVLI). Over 308 to 355 (SKKFQARFRSSVAEILKYTLWEVSCSGTVSEQLRNSETKNLCLLETAQ) the chain is Cytoplasmic.

Belongs to the chemokine-like receptor (CMKLR) family.

The protein localises to the cell membrane. Its function is as follows. Receptor for chemoattractant adipokine chemerin/RARRES2 suggesting a role for this receptor in the regulation of inflammation and energy homesotasis. Signals mainly via beta-arrestin pathway. Binding of RARRES2 activates weakly G proteins, calcium mobilization and MAPK1/MAPK3 (ERK1/2) phosphorylation too. Acts also as a receptor for TAFA1, mediates its effects on neuronal stem-cell proliferation and differentiation via the activation of ROCK/ERK and ROCK/STAT3 signaling pathway. The sequence is that of Chemerin-like receptor 2 (CMKLR2) from Macaca mulatta (Rhesus macaque).